The chain runs to 99 residues: Nucleoid-associated protein EbfC (99 aa).

It belongs to the YbaB/EbfC family. In terms of assembly, homodimer.

Its subcellular location is the cytoplasm. It is found in the nucleoid. Its function is as follows. Binds to DNA and alters its conformation. May be involved in regulation of gene expression, nucleoid organization and DNA protection. The protein is Nucleoid-associated protein EbfC of Borreliella afzelii (strain PKo) (Borrelia afzelii).